The sequence spans 237 residues: Glutathione S-transferase psoE (237 aa).

The 78-residue stretch at 2 to 79 (VFGTLYTFPG…YITSQNEQTT (78 aa)) folds into the GST N-terminal domain. R37, K49, V50, E63, C64, and N99 together coordinate glutathione. K49 is a binding site for substrate. One can recognise a GST C-terminal domain in the interval 84–222 (DKKEYAEIIK…NNPPEKKPET (139 aa)). Residue Q108 participates in substrate binding. Over residues 208 to 222 (EPKLTNNPPEKKPET) the composition is skewed to basic and acidic residues. The disordered stretch occupies residues 208-237 (EPKLTNNPPEKKPETVPKNGAAVAIEATQA).

It belongs to the GST superfamily. Glutathione is required as a cofactor.

The protein operates within secondary metabolite biosynthesis. Functionally, glutathione S-transferase; part of the gene cluster that mediates the biosynthesis of pseurotin A, a competitive inhibitor of chitin synthase and an inducer of nerve-cell proliferation. The PKS-NRPS hybrid synthetase psoA is responsible for the biosynthesis of azaspirene, one of the first intermediates having the 1-oxa-7-azaspiro[4,4]-non-2-ene-4,6-dione core of pseurotin, via condensation of one acetyl-CoA, 4 malonyl-CoA, and a L-phenylalanine molecule. The dual-functional monooxygenase/methyltransferase psoF seems to be involved in the addition of the C3 methyl group onto the pseurotin scaffold. Azaspirene is then converted to synerazol through 4 steps including oxidation of C17 by the cytochrome P450 monooxygenase psoD, O-methylation of the hydroxy group of C8 by the methyltransferase psoC, and the trans-to-cis isomerization of the C13 olefin by the glutathione S-transferase psoE. The fourth step of synerazol production is performed by the dual-functional monooxygenase/methyltransferase psoF which seems to catalyze the epoxidation of the intermediate deepoxy-synerazol. Synerazol can be attacked by a water molecule nonenzymatically at two different positions to yield two diol products, pseurotin A and pseurotin D. The sequence is that of Glutathione S-transferase psoE from Aspergillus fumigatus (strain ATCC MYA-4609 / CBS 101355 / FGSC A1100 / Af293) (Neosartorya fumigata).